The primary structure comprises 353 residues: Photosystem II protein D1 (353 aa).

At Thr-2 the chain carries N-acetylthreonine. Thr-2 is subject to Phosphothreonine. Helical transmembrane passes span 29–46 (YIGW…TATS), 118–133 (HFLL…EWEL), and 142–156 (WIAV…AATA). Residue His-118 participates in chlorophyll a binding. Tyr-126 contacts pheophytin a. Residues Asp-170 and Glu-189 each coordinate [CaMn4O5] cluster. Residues 197–218 (FHMLGVAGVFGGSLFSAMHGSL) traverse the membrane as a helical segment. A chlorophyll a-binding site is contributed by His-198. A quinone is bound by residues His-215 and 264–265 (SF). His-215 lines the Fe cation pocket. Residue His-272 coordinates Fe cation. The helical transmembrane segment at 274–288 (FLAAWPVVGIWFTAL) threads the bilayer. Residues His-332, Glu-333, and Ala-344 each coordinate [CaMn4O5] cluster. The propeptide occupies 345 to 353 (AIEAPAVNG).

Belongs to the reaction center PufL/M/PsbA/D family. PSII is composed of 1 copy each of membrane proteins PsbA, PsbB, PsbC, PsbD, PsbE, PsbF, PsbH, PsbI, PsbJ, PsbK, PsbL, PsbM, PsbT, PsbX, PsbY, PsbZ, Psb30/Ycf12, at least 3 peripheral proteins of the oxygen-evolving complex and a large number of cofactors. It forms dimeric complexes. The D1/D2 heterodimer binds P680, chlorophylls that are the primary electron donor of PSII, and subsequent electron acceptors. It shares a non-heme iron and each subunit binds pheophytin, quinone, additional chlorophylls, carotenoids and lipids. D1 provides most of the ligands for the Mn4-Ca-O5 cluster of the oxygen-evolving complex (OEC). There is also a Cl(-1) ion associated with D1 and D2, which is required for oxygen evolution. The PSII complex binds additional chlorophylls, carotenoids and specific lipids. serves as cofactor. Post-translationally, tyr-161 forms a radical intermediate that is referred to as redox-active TyrZ, YZ or Y-Z. C-terminally processed by CTPA; processing is essential to allow assembly of the oxygen-evolving complex and thus photosynthetic growth.

The protein resides in the plastid. The protein localises to the chloroplast thylakoid membrane. It catalyses the reaction 2 a plastoquinone + 4 hnu + 2 H2O = 2 a plastoquinol + O2. In terms of biological role, photosystem II (PSII) is a light-driven water:plastoquinone oxidoreductase that uses light energy to abstract electrons from H(2)O, generating O(2) and a proton gradient subsequently used for ATP formation. It consists of a core antenna complex that captures photons, and an electron transfer chain that converts photonic excitation into a charge separation. The D1/D2 (PsbA/PsbD) reaction center heterodimer binds P680, the primary electron donor of PSII as well as several subsequent electron acceptors. This is Photosystem II protein D1 from Conocephalum japonicum (Liverwort).